The sequence spans 198 residues: Glycerol-3-phosphate acyltransferase (198 aa).

The next 6 helical transmembrane spans lie at 1–21 (MHIL…GFLF), 50–70 (WPAF…VKIA), 77–97 (NLFE…PIWL), 111–131 (MFIA…LIIL), 136–156 (IVSL…FLDI), and 157–177 (GSTN…VIWK).

The protein belongs to the PlsY family. As to quaternary structure, probably interacts with PlsX.

It localises to the cell inner membrane. The enzyme catalyses an acyl phosphate + sn-glycerol 3-phosphate = a 1-acyl-sn-glycero-3-phosphate + phosphate. It functions in the pathway lipid metabolism; phospholipid metabolism. Catalyzes the transfer of an acyl group from acyl-phosphate (acyl-PO(4)) to glycerol-3-phosphate (G3P) to form lysophosphatidic acid (LPA). This enzyme utilizes acyl-phosphate as fatty acyl donor, but not acyl-CoA or acyl-ACP. The protein is Glycerol-3-phosphate acyltransferase of Prochlorococcus marinus subsp. pastoris (strain CCMP1986 / NIES-2087 / MED4).